We begin with the raw amino-acid sequence, 385 residues long: Prepilin peptidase EppA (385 aa).

10 helical membrane-spanning segments follow: residues 1–21 (MILMVIELLSVFIALLACFYA), 29–49 (GIIPNRLTFPVIGLGLLLNGA), 58–78 (WIFIYTAIFTAGIFALGYILW), 80–100 (MVAWAGGDVKLFTAVTSLLPF), 104–124 (LVSYSFLGTAFPVTASYPFPL), 126–146 (VIINSILALLPFLLVYVFFII), 166–186 (TSMVLALVITSAVTLTFLITD), 187–207 (FLPFQIIVLSLILVYLLTMVI), 231–251 (FELTVSGVVILWVSITVIQLI), and 358–378 (PAIFIGLLVSLLIGDLAMILF).

This sequence belongs to the peptidase A24 family.

It localises to the cell membrane. In terms of biological role, peptidase that processes the N-terminus of prepilins. This chain is Prepilin peptidase EppA, found in Methanothermobacter thermautotrophicus (strain ATCC 29096 / DSM 1053 / JCM 10044 / NBRC 100330 / Delta H) (Methanobacterium thermoautotrophicum).